A 271-amino-acid polypeptide reads, in one-letter code: MLLAPPSTPSRGRTPSAVERLEADKAKYVKTHQVIARRQEPALRGSPGPLTPHPCNELGPPASPRTPRPVRRGSGRRLPRPDSLIFYRQKRDCKASVNKENAKGQGLVRRLFLGAPRDAAPSSPASTERPAASGGWAAPQDAPEAAGKRALCPTCSLPLSEKERFFNYCGLERALVEVLGAERFSPQSWGADASPQAGTSPPPGSGDASDWTSSDRGVDSPGGAGGGGGSEAAGSARDRRPPVSVVERNARVIQWLYGCQRARGPPRESEV.

3 disordered regions span residues Met1–Ser83, Pro116–Ala145, and Pro186–Val245. The span at Arg68–Leu78 shows a compositional bias: basic residues. Residues Pro116 to Ser126 are compositionally biased toward low complexity. The span at Ser220–Glu231 shows a compositional bias: gly residues.

It belongs to the FAM110 family.

The chain is Protein FAM110D (FAM110D) from Homo sapiens (Human).